A 390-amino-acid polypeptide reads, in one-letter code: Transforming growth factor beta-1 proprotein (390 aa).

The signal sequence occupies residues 1–29 (MPPSGLRLLPLLLPLPWLLVLTPGRPAAG). The segment at 30–74 (LSTCKTIDMELVKRKRIEAIRGQILSKLRLASPPSQGEVPPGPLP) is straightjacket domain. An arm domain region spans residues 75–271 (EAVLALYNST…ATPLERAQHL (197 aa)). 3 N-linked (GlcNAc...) asparagine glycosylation sites follow: Asn-82, Asn-136, and Asn-176. The interval 226–252 (DSKDNVLHVEINGISPKRRGDLGTIHD) is bowtie tail. A Cell attachment site motif is present at residues 244-246 (RGD). 4 disulfide bridges follow: Cys-285-Cys-294, Cys-293-Cys-356, Cys-322-Cys-387, and Cys-326-Cys-389.

This sequence belongs to the TGF-beta family. In terms of assembly, homodimer; disulfide-linked. Interacts with the serine proteases, HTRA1 and HTRA3: the interaction with either inhibits TGFB1-mediated signaling and the HTRA protease activity is required for this inhibition. May interact with THSD4; this interaction may lead to sequestration by FBN1 microfibril assembly and attenuation of TGFB signaling. Interacts with CD109, DPT and ASPN. Interacts with EFEMP2. Interacts with TSKU; the interaction contributes to regulation of the hair cycle. Interacts with TGFBR3. Homodimer; disulfide-linked. Interacts with transforming growth factor beta-1 (TGF-beta-1) chain; interaction is non-covalent and maintains TGF-beta-1 in a latent state; each latency-associated peptide (LAP) monomer interacts with TGF-beta-1 in the other monomer. Interacts with LTBP1; leading to regulation of TGF-beta-1 activation. Interacts with LRRC32/GARP; leading to regulation of TGF-beta-1 activation on the surface of activated regulatory T-cells (Tregs). Interacts with LRRC33/NRROS; leading to regulation of TGF-beta-1 activation in macrophages and microglia. Interacts (via cell attachment site) with integrins ITGAV and ITGB6 (ITGAV:ITGB6), leading to release of the active TGF-beta-1. Interacts with NREP; the interaction results in a decrease in TGFB1 autoinduction. Interacts with HSP90AB1; inhibits latent TGFB1 activation. As to quaternary structure, homodimer; disulfide-linked. Interacts with TGF-beta receptors (TGFBR1 and TGFBR2), leading to signal transduction. Post-translationally, transforming growth factor beta-1 proprotein: The precursor proprotein is cleaved in the Golgi apparatus by FURIN to form Transforming growth factor beta-1 (TGF-beta-1) and Latency-associated peptide (LAP) chains, which remain non-covalently linked, rendering TGF-beta-1 inactive. N-glycosylated. Deglycosylation leads to activation of Transforming growth factor beta-1 (TGF-beta-1); mechanisms triggering deglycosylation-driven activation of TGF-beta-1 are however unclear. In terms of tissue distribution, abundant in the bone matrix. Expressed in cardiomyocytes.

It localises to the secreted. The protein localises to the extracellular space. It is found in the extracellular matrix. Transforming growth factor beta-1 proprotein: Precursor of the Latency-associated peptide (LAP) and Transforming growth factor beta-1 (TGF-beta-1) chains, which constitute the regulatory and active subunit of TGF-beta-1, respectively. Its function is as follows. Required to maintain the Transforming growth factor beta-1 (TGF-beta-1) chain in a latent state during storage in extracellular matrix. Associates non-covalently with TGF-beta-1 and regulates its activation via interaction with 'milieu molecules', such as LTBP1, LRRC32/GARP and LRRC33/NRROS, that control activation of TGF-beta-1. Interaction with LRRC33/NRROS regulates activation of TGF-beta-1 in macrophages and microglia. Interaction with LRRC32/GARP controls activation of TGF-beta-1 on the surface of activated regulatory T-cells (Tregs). Interaction with integrins (ITGAV:ITGB6 or ITGAV:ITGB8) results in distortion of the Latency-associated peptide chain and subsequent release of the active TGF-beta-1. Functionally, multifunctional protein that regulates the growth and differentiation of various cell types and is involved in various processes, such as normal development, immune function, microglia function and responses to neurodegeneration. Activation into mature form follows different steps: following cleavage of the proprotein in the Golgi apparatus, Latency-associated peptide (LAP) and Transforming growth factor beta-1 (TGF-beta-1) chains remain non-covalently linked rendering TGF-beta-1 inactive during storage in extracellular matrix. At the same time, LAP chain interacts with 'milieu molecules', such as LTBP1, LRRC32/GARP and LRRC33/NRROS that control activation of TGF-beta-1 and maintain it in a latent state during storage in extracellular milieus. TGF-beta-1 is released from LAP by integrins (ITGAV:ITGB6 or ITGAV:ITGB8): integrin-binding to LAP stabilizes an alternative conformation of the LAP bowtie tail and results in distortion of the LAP chain and subsequent release of the active TGF-beta-1. Once activated following release of LAP, TGF-beta-1 acts by binding to TGF-beta receptors (TGFBR1 and TGFBR2), which transduce signal. While expressed by many cells types, TGF-beta-1 only has a very localized range of action within cell environment thanks to fine regulation of its activation by Latency-associated peptide chain (LAP) and 'milieu molecules'. Plays an important role in bone remodeling: acts as a potent stimulator of osteoblastic bone formation, causing chemotaxis, proliferation and differentiation in committed osteoblasts. Can promote either T-helper 17 cells (Th17) or regulatory T-cells (Treg) lineage differentiation in a concentration-dependent manner. At high concentrations, leads to FOXP3-mediated suppression of RORC and down-regulation of IL-17 expression, favoring Treg cell development. At low concentrations in concert with IL-6 and IL-21, leads to expression of the IL-17 and IL-23 receptors, favoring differentiation to Th17 cells. Stimulates sustained production of collagen through the activation of CREB3L1 by regulated intramembrane proteolysis (RIP). Mediates SMAD2/3 activation by inducing its phosphorylation and subsequent translocation to the nucleus. Positively regulates odontoblastic differentiation in dental papilla cells, via promotion of IPO7-mediated translocation of phosphorylated SMAD2 to the nucleus and subsequent transcription of target genes. Can induce epithelial-to-mesenchymal transition (EMT) and cell migration in various cell types. In Rattus norvegicus (Rat), this protein is Transforming growth factor beta-1 proprotein (Tgfb1).